The primary structure comprises 704 residues: SH3KBP1-binding protein 1 (704 aa).

The residue at position 2 (Ala-2) is an N-acetylalanine. Positions 19–88 (EVIHLNVGGK…LRTKELDPRG (70 aa)) constitute a BTB domain. Residues 146-165 (VGPQQIGGRPAPVRRSNTMP) are disordered. Thr-163 is modified (phosphothreonine). WD repeat units follow at residues 233-280 (RLDW…GGSE), 283-322 (VFHLGVPVEALFFVGNQLIATSHTGRIGVWNAVTKHWQVQ), 324-359 (VQPITSYDAAGSFLLLGCSNGSIYYVDVQKFPLRMK), 428-466 (VHRSPVTKIMLSEKHLISVCADNNHVRTWSVTRFRGMIS), and 548-586 (LECEGSRRLGSRPRRYLLTGQANGSLAMWDLTTAMDGLG). Residues 609–704 (PLTSSRASFP…PKNTLNETSF (96 aa)) are disordered. Low complexity predominate over residues 611–631 (TSSRASFPSPSPRTSLTSLHS). The PXXXPR motif lies at 618–623 (PSPSPR). A phosphoserine mark is found at Ser-644 and Ser-646. A PXXXPR motif is present at residues 678–683 (PTPAPR).

Belongs to the KCTD3 family. As to quaternary structure, monomer. Interacts with CUL3; interaction is direct and forms a 5:5 heterodecamer. Interacts (via PXXXPR motifs) with SH3KBP1 (via SH3 domains). Directly interacts with cathepsin B/CTSB.

It localises to the lysosome. Functionally, inhibits CBL-SH3KBP1 complex mediated down-regulation of EGFR signaling by sequestration of SH3KBP1. Binds to SH3KBP1 and prevents its interaction with CBL and inhibits translocation of SH3KBP1 to EGFR containing vesicles upon EGF stimulation. This chain is SH3KBP1-binding protein 1 (Shkbp1), found in Rattus norvegicus (Rat).